Reading from the N-terminus, the 258-residue chain is Peptidase inhibitor 15 (258 aa).

The N-terminal stretch at 1-21 (MIEMISISAAFLLSLLCETCG) is a signal peptide. Residues 22 to 60 (LVLPKSSDLAIAASNYTIIKPDLSARLDPVKAPKARRKR) constitute a propeptide that is removed on maturation. N-linked (GlcNAc...) asparagine glycosylation is found at Asn36 and Asn124. The SCP domain occupies 71-211 (VEYHNQVRGK…RRAVYLVCNY (141 aa)).

This sequence belongs to the CRISP family.

Its subcellular location is the secreted. Serine protease inhibitor which displays weak inhibitory activity against trypsin. May be involved in facial patterning during embryonic development. In Xenopus laevis (African clawed frog), this protein is Peptidase inhibitor 15 (pi15).